Here is a 1551-residue protein sequence, read N- to C-terminus: MGFCLALAWTLLVGAWTPLGAQNPISWEVQRFDGWYNNLMEHRWGSKGSRLQRLVPASYADGVYQPLGEPHLPNPRDLSNTISRGPAGLASLRNRTVLGVFFGYHVLSDLVSVETPGCPAEFLNIRIPPGDPMFDPDQRGDVVLPFQRSRWDPETGRSPSNPRDPANQVTGWLDGSAIYGSSHSWSDALRSFSRGQLASGPDPAFPRDSQNPLLMWAAPDPATGQNGPRGLYAFGAERGNREPFLQALGLLWFRYHNLWAQRLARQHPDWEDEELFQHARKRVIATYQNIAVYEWLPSFLQKTLPEYTGYRPFLDPSISSEFVAASEQFLSTMVPPGVYMRNASCHFQGVINRNSSVSRALRVCNSYWSREHPSLQSAEDVDALLLGMASQIAEREDHVLVEDVRDFWPGPLKFSRTDHLASCLQRGRDLGLPSYTKARAALGLSPITRWQDINPALSRSNDTVLEATAALYNQDLSWLELLPGGLLESHRDPGPLFSTIVLEQFVRLRDGDRYWFENTRNGLFSKKEIEEIRNTTLQDVLVAVINIDPSALQPNVFVWHKGDPCPQPRQLSTEGLPACAPSVVRDYFEGSGFGFGVTIGTLCCFPLVSLLSAWIVARLRMRNFKRLQGQDRQSIVSEKLVGGMEALEWQGHKEPCRPVLVYLQPGQIRVVDGRLTVLRTIQLQPPQKVNFVLSSNRGRRTLLLKIPKEYDLVLLFNLEEERQALVENLRGALKESGLSIQEWELREQELMRAAVTREQRRHLLETFFRHLFSQVLDINQADAGTLPLDSSQKVREALTCELSRAEFAESLGLKPQDMFVESMFSLADKDGNGYLSFREFLDILVVFMKGSPEEKSRLMFRMYDFDGNGLISKDEFIRMLRSFIEISNNCLSKAQLAEVVESMFRESGFQDKEELTWEDFHFMLRDHNSELRFTQLCVKGVEVPEVIKDLCRRASYISQDMICPSPRVSARCSRSDIETELTPQRLQCPMDTDPPQEIRRRFGKKVTSFQPLLFTEAHREKFQRSCLHQTVQQFKRFIENYRRHIGCVAVFYAIAGGLFLERAYYYAFAAHHTGITDTTRVGIILSRGTAASISFMFSYILLTMCRNLITFLRETFLNRYVPFDAAVDFHRLIASTAIVLTVLHSVGHVVNVYLFSISPLSVLSCLFPGLFHDDGSELPQKYYWWFFQTVPGLTGVVLLLILAIMYVFASHHFRRRSFRGFWLTHHLYILLYVLLIIHGSFALIQLPRFHIFFLVPAIIYGGDKLVSLSRKKVEISVVKAELLPSGVTHLRFQRPQGFEYKSGQWVRIACLALGTTEYHPFTLTSAPHEDTLSLHIRAAGPWTTRLREIYSAPTGDRCARYPKLYLDGPFGEGHQEWHKFEVSVLVGGGIGVTPFASILKDLVFKSSVSCQVFCKKIYFIWVTRTQRQFEWLADIIREVEENDHQDLVSVHIYITQLAEKFDLRTTMLYICERHFQKVLNRSLFTGLRSITHFGRPPFEPFFNSLQEVHPQVRKIGVFSCGPPGMTKNVEKACQLINRQDRTHFSHHYENF.

The first 21 residues, 1–21 (MGFCLALAWTLLVGAWTPLGA), serve as a signal peptide directing secretion. Topologically, residues 22–596 (QNPISWEVQR…YFEGSGFGFG (575 aa)) are extracellular. Positions 26 to 593 (SWEVQRFDGW…VRDYFEGSGF (568 aa)) are peroxidase-like; mediates peroxidase activity. A glycan (N-linked (GlcNAc...) asparagine) is linked at N94. The interval 150-172 (RWDPETGRSPSNPRDPANQVTGW) is disordered. Residues N342, N354, N461, and N534 are each glycosylated (N-linked (GlcNAc...) asparagine). A helical transmembrane segment spans residues 597 to 617 (VTIGTLCCFPLVSLLSAWIVA). Residues 618–1044 (RLRMRNFKRL…KRFIENYRRH (427 aa)) are Cytoplasmic-facing. EF-hand domains follow at residues 815 to 850 (PQDM…FMKG), 851 to 886 (SPEE…FIEI), and 895 to 930 (QLAE…HNSE). D828, D830, N832, Y834, E839, D864, D866, N868, and E875 together coordinate Ca(2+). The interval 956–1248 (YISQDMICPS…GSFALIQLPR (293 aa)) is interaction with TXNDC11. A helical transmembrane segment spans residues 1045–1065 (IGCVAVFYAIAGGLFLERAYY). Topologically, residues 1066 to 1080 (YAFAAHHTGITDTTR) are extracellular. Residues 1081–1101 (VGIILSRGTAASISFMFSYIL) traverse the membrane as a helical segment. The region spanning 1087–1269 (RGTAASISFM…YGGDKLVSLS (183 aa)) is the Ferric oxidoreductase domain. The Cytoplasmic segment spans residues 1102–1148 (LTMCRNLITFLRETFLNRYVPFDAAVDFHRLIASTAIVLTVLHSVGH). A helical transmembrane segment spans residues 1149-1171 (VVNVYLFSISPLSVLSCLFPGLF). At 1172-1188 (HDDGSELPQKYYWWFFQ) the chain is on the extracellular side. Residues 1189–1209 (TVPGLTGVVLLLILAIMYVFA) form a helical membrane-spanning segment. The Cytoplasmic portion of the chain corresponds to 1210 to 1226 (SHHFRRRSFRGFWLTHH). The chain crosses the membrane as a helical span at residues 1227-1247 (LYILLYVLLIIHGSFALIQLP). R1248 is a topological domain (extracellular). Residues 1249–1269 (FHIFFLVPAIIYGGDKLVSLS) traverse the membrane as a helical segment. One can recognise an FAD-binding FR-type domain in the interval 1270–1376 (RKKVEISVVK…DGPFGEGHQE (107 aa)). Over 1270–1551 (RKKVEISVVK…THFSHHYENF (282 aa)) the chain is Cytoplasmic.

The protein in the N-terminal section; belongs to the peroxidase family. Interacts with TXNDC11, TPO and CYBA. Post-translationally, N-glycosylated. Expressed in thyrocytes and tracheal surface epithelial cells (at protein level). Expressed in thyroid, trachea, bronchium, and to a lower extent, in placenta, testis, prostate, pancreas and heart.

The protein localises to the apical cell membrane. It carries out the reaction NADH + O2 + H(+) = H2O2 + NAD(+). The catalysed reaction is NADPH + O2 + H(+) = H2O2 + NADP(+). The protein operates within hormone biosynthesis; thyroid hormone biosynthesis. With respect to regulation, the NADPH oxidase activity is calcium-dependent. Peroxidase activity is inhibited by aminobenzohydrazide. In terms of biological role, generates hydrogen peroxide which is required for the activity of thyroid peroxidase/TPO and lactoperoxidase/LPO. Plays a role in thyroid hormones synthesis and lactoperoxidase-mediated antimicrobial defense at the surface of mucosa. May have its own peroxidase activity through its N-terminal peroxidase-like domain. The sequence is that of Dual oxidase 1 (DUOX1) from Homo sapiens (Human).